The chain runs to 209 residues: Large ribosomal subunit protein uL3 (209 aa).

It belongs to the universal ribosomal protein uL3 family. In terms of assembly, part of the 50S ribosomal subunit. Forms a cluster with proteins L14 and L19.

Functionally, one of the primary rRNA binding proteins, it binds directly near the 3'-end of the 23S rRNA, where it nucleates assembly of the 50S subunit. The protein is Large ribosomal subunit protein uL3 of Carboxydothermus hydrogenoformans (strain ATCC BAA-161 / DSM 6008 / Z-2901).